The sequence spans 210 residues: NAD(P)H-quinone oxidoreductase subunit I (210 aa).

4Fe-4S ferredoxin-type domains are found at residues 54–83 (GRIH…VDWV) and 94–123 (YSYS…VTED). [4Fe-4S] cluster contacts are provided by Cys-63, Cys-66, Cys-69, Cys-73, Cys-103, Cys-106, Cys-109, and Cys-113.

The protein belongs to the complex I 23 kDa subunit family. As to quaternary structure, NDH-1 is composed of at least 11 different subunits. The cofactor is [4Fe-4S] cluster.

It is found in the cellular thylakoid membrane. The enzyme catalyses a plastoquinone + NADH + (n+1) H(+)(in) = a plastoquinol + NAD(+) + n H(+)(out). It catalyses the reaction a plastoquinone + NADPH + (n+1) H(+)(in) = a plastoquinol + NADP(+) + n H(+)(out). In terms of biological role, NDH-1 shuttles electrons from an unknown electron donor, via FMN and iron-sulfur (Fe-S) centers, to quinones in the respiratory and/or the photosynthetic chain. The immediate electron acceptor for the enzyme in this species is believed to be plastoquinone. Couples the redox reaction to proton translocation, and thus conserves the redox energy in a proton gradient. In Synechococcus sp. (strain JA-3-3Ab) (Cyanobacteria bacterium Yellowstone A-Prime), this protein is NAD(P)H-quinone oxidoreductase subunit I.